A 393-amino-acid polypeptide reads, in one-letter code: RNA polymerase II holoenzyme cyclin-like subunit (393 aa).

In terms of domain architecture, Cyclin N-terminal spans 51–146 (ICKRLNLRQR…LLEEMEFDMV (96 aa)).

This sequence belongs to the cyclin family. Cyclin C subfamily. In terms of assembly, component of the SRB8-11 complex, a regulatory module of the Mediator complex.

The protein resides in the nucleus. Its function is as follows. Component of the SRB8-11 complex. The SRB8-11 complex is a regulatory module of the Mediator complex which is itself involved in regulation of basal and activated RNA polymerase II-dependent transcription. The SRB8-11 complex may be involved in the transcriptional repression of a subset of genes regulated by Mediator. It may inhibit the association of the Mediator complex with RNA polymerase II to form the holoenzyme complex. The SRB8-11 complex phosphorylates the C-terminal domain (CTD) of the largest subunit of RNA polymerase II. This is RNA polymerase II holoenzyme cyclin-like subunit (SSN8) from Mycosarcoma maydis (Corn smut fungus).